The sequence spans 444 residues: Tol-Pal system protein TolB (444 aa).

A signal peptide spans 1 to 19 (MRNIIYFILSLLFSFKGYA).

This sequence belongs to the TolB family. In terms of assembly, the Tol-Pal system is composed of five core proteins: the inner membrane proteins TolA, TolQ and TolR, the periplasmic protein TolB and the outer membrane protein Pal. They form a network linking the inner and outer membranes and the peptidoglycan layer.

Its subcellular location is the periplasm. In terms of biological role, part of the Tol-Pal system, which plays a role in outer membrane invagination during cell division and is important for maintaining outer membrane integrity. The protein is Tol-Pal system protein TolB of Rickettsia felis (strain ATCC VR-1525 / URRWXCal2) (Rickettsia azadi).